A 214-amino-acid chain; its full sequence is Thymidylate kinase (214 aa).

7–14 (GIDGAGKS) contacts ATP.

This sequence belongs to the thymidylate kinase family.

The catalysed reaction is dTMP + ATP = dTDP + ADP. Phosphorylation of dTMP to form dTDP in both de novo and salvage pathways of dTTP synthesis. The chain is Thymidylate kinase from Chlorobaculum tepidum (strain ATCC 49652 / DSM 12025 / NBRC 103806 / TLS) (Chlorobium tepidum).